Reading from the N-terminus, the 335-residue chain is MKTLGEFIVEKQQDFPHATGELTALLSAIKLGAKIIHRDINKAGLVDILGTNGVSNVQGEAQMKLDLYANEKLKAALKARGEVAGIGSEEEDDIVIFEGDRAENAKYVVLMDPLDGSSNIDVNVSVGTIFSIYHRITPIGQPVTLDDFLQPGNRQVAAGYVVYGSSTMLVYTTGCGVHAFTYDPSLGVFCLSHESVHFPPTGNMYSINEGNYIKFPLGVKKYIKYCQEQDATTNRPYTTRYIGSLVADFHRNLLKGGIYIYPSTASHPNGKLRLLYECNPMAFLAEQAGGKASNGKDRILDIKPTELHQRMPFFVGTKAMVEQAEAFMAQYPDEE.

Mg(2+)-binding residues include glutamate 89, aspartate 112, leucine 114, and aspartate 115. Substrate contacts are provided by residues 115 to 118 (DGSS), asparagine 208, tyrosine 241, and lysine 271. Glutamate 277 contributes to the Mg(2+) binding site.

This sequence belongs to the FBPase class 1 family. As to quaternary structure, homotetramer. It depends on Mg(2+) as a cofactor.

It localises to the cytoplasm. It carries out the reaction beta-D-fructose 1,6-bisphosphate + H2O = beta-D-fructose 6-phosphate + phosphate. The protein operates within carbohydrate biosynthesis; gluconeogenesis. This is Fructose-1,6-bisphosphatase class 1 from Proteus mirabilis (strain HI4320).